Reading from the N-terminus, the 3393-residue chain is Genome polyprotein (3393 aa).

The Cytoplasmic segment spans residues 1 to 91 (MVNPKGVNVM…GVSRRKKRRS (91 aa)). Positions 28 to 60 (VSRGLRGFVLFVLTQLFMGRKLTPNVRRLWKSS) are hydrophobic; homodimerization of capsid protein C. A propeptide spans 91 to 108 (SATTSGTVFMAMLGLTLA) (ER anchor for the capsid protein C, removed in mature form by serine protease NS3). A helical membrane pass occupies residues 92 to 112 (ATTSGTVFMAMLGLTLAASVA). At 113–231 (RHAHHTLINI…FETQVQKVEK (119 aa)) the chain is on the extracellular side. 2 N-linked (GlcNAc...) asparagine; by host glycosylation sites follow: Asn121 and Asn137. A helical membrane pass occupies residues 232-252 (WIIRNPTYAIAAILMSWYIGN). Residues 253–257 (SLKQR) lie on the Cytoplasmic side of the membrane. Residues 258-272 (VVLLLLTLALGPAYA) form a helical membrane-spanning segment. The Extracellular portion of the chain corresponds to 273-713 (THCVGIPKRD…IHTVFGTAFH (441 aa)). 5 disulfides stabilise this stretch: Cys275–Cys302, Cys346–Cys377, Cys364–Cys388, Cys453–Cys553, and Cys570–Cys600. The segment at 370–383 (DRGWGNGCGLFGKG) is fusion peptide. Residues 714 to 734 (GIFGGLSWMTRILIGVLLVWL) traverse the membrane as a helical segment. The Cytoplasmic portion of the chain corresponds to 735–745 (GLNSRNGTATT). The helical transmembrane segment at 746-763 (LMMLTGFIILFLSLGVGA) threads the bilayer. Residues 764 to 1112 (EVGCSVNWGQ…TPEKHLVRSW (349 aa)) are Extracellular-facing. 8 disulfides stabilise this stretch: Cys767/Cys778, Cys818/Cys905, Cys941/Cys986, Cys1043/Cys1092, Cys1054/Cys1075, Cys1054/Cys1076, Cys1075/Cys1079, and Cys1076/Cys1079. N-linked (GlcNAc...) asparagine; by host glycosylation is found at Asn893 and Asn970. Residues 1113 to 1133 (VTAGDSYPAWSIGLVAMFLFV) traverse the membrane as a helical segment. The Cytoplasmic segment spans residues 1134-1186 (DIMARSRPTRKMMIGGTMLLLAIMIMGELSYLDLLRYIIVVGEHFIERENGGD). A helical membrane pass occupies residues 1187-1207 (VAYMAIMAASHLRPGLMAMVF). The Lumenal portion of the chain corresponds to 1208–1283 (AKSMWSPKQR…PVSMPVIRKA (76 aa)). Residues 1284–1304 (SMIIGTGGLLLSLWKGGGSSM) form a helical membrane-spanning segment. Residues 1305–1341 (RKGLPLFAASAARVLGLTKAHLSVLFILLITKNGKRT) lie on the Cytoplasmic side of the membrane. Residues 1342 to 1362 (WPISECLAAVGIFGAAFGTMF) form a helical membrane-spanning segment. Residues 1363–1365 (SED) are Lumenal-facing. A helical membrane pass occupies residues 1366-1386 (ETLLGPLALVGVVLIVYTMFT). Topologically, residues 1387 to 1438 (QSDGLELVKAADISWSDEAVVSGEARRFDVALNDSGEFKLLDEPPVSWLNVS) are cytoplasmic. The segment at 1393 to 1432 (LVKAADISWSDEAVVSGEARRFDVALNDSGEFKLLDEPPV) is interacts with and activates NS3 protease. Positions 1439–1459 (FLVVAIVASSLHPIALVVTLV) form an intramembrane region, helical. At 1460 to 2137 (AWTYWRTEKR…KLALQQAPEA (678 aa)) the chain is on the cytoplasmic side. The Peptidase S7 domain maps to 1470–1649 (SGVLWDVPLA…QPGSVAEVET (180 aa)). Catalysis depends on charge relay system; for serine protease NS3 activity residues His1521, Asp1545, and Ser1606. In terms of domain architecture, Helicase ATP-binding spans 1653–1809 (DKMLRKGEFT…ESNAEIEDVK (157 aa)). An important for RNA-binding region spans residues 1657–1660 (RKGE). 1666–1673 (YHPGAGKT) contacts ATP. A DEAH box motif is present at residues 1757 to 1760 (DEAH). In terms of domain architecture, Helicase C-terminal spans 1804–1984 (EIEDVKKEIP…VAPLYEEEAS (181 aa)). The chain crosses the membrane as a helical span at residues 2138 to 2158 (VSTLLLLGMMAICTLGLVILL). The Lumenal segment spans residues 2159-2168 (MKPKATDKMS). The helical intramembrane region spans 2169–2184 (MAMVTMAITGYLLKLG). A topological domain (lumenal) is located at residue Gly2185. A helical transmembrane segment spans residues 2186-2206 (MTHAQVGGILLVFFIMMVVII). Residues 2207–2221 (PESGTQRSINDNKLA) are Cytoplasmic-facing. A helical membrane pass occupies residues 2222 to 2236 (YVIILVGLVIGGVAC). Residues 2237–2275 (NELGWLEKTKADLFGNNMTHAQTVVLPTINWNWLDFRPG) are Lumenal-facing. Positions 2276–2296 (AAWSLYVGMATFLTPVFVHWI) form an intramembrane region, helical. The Lumenal segment spans residues 2297–2344 (KNEYGNASLTGITPTAGILGALNQGVPFVKLNTSVGVLLLSVWNNFTT). Residues 2345–2365 (SSMLAAMVMLACHCLFVLPGV) traverse the membrane as a helical segment. The Cytoplasmic segment spans residues 2366 to 2408 (RAQCLREAQIRVFHGVAKNPMVDGNPTVDLEKENDMPDLYEKK). A helical transmembrane segment spans residues 2409–2429 (LALVALGMAAVLNAAMVRTAL). The Lumenal segment spans residues 2430–2457 (TTAEMVVLGSAAVGPLLEGNTSAFWNGP). The chain crosses the membrane as a helical span at residues 2458–2478 (LAVAVAGVMRGNHYALIGIVY). The Cytoplasmic segment spans residues 2479–3393 (NLWLLKTARR…QRCSAYGELL (915 aa)). The region spanning 2489 to 2753 (GGSSALTYGE…DLIYPTGTRS (265 aa)) is the mRNA cap 0-1 NS5-type MT domain. Residue Ser2544 coordinates S-adenosyl-L-methionine. At Ser2544 the chain carries Phosphoserine. Lys2549 serves as the catalytic For 2'-O-MTase activity. S-adenosyl-L-methionine contacts are provided by Gly2574, Trp2575, Thr2592, Leu2593, Asp2619, and Ile2620. Catalysis depends on Asp2634, which acts as the For 2'-O-MTase activity. Ile2635 provides a ligand contact to S-adenosyl-L-methionine. Residues Lys2670 and Glu2706 each act as for 2'-O-MTase activity in the active site. Residue Tyr2708 coordinates S-adenosyl-L-methionine. A Nuclear localization signal motif is present at residues 2860-2893 (REIMKVVNQWLFDYLGRTKQPRICTKEEFINKVR). Positions 2927, 2931, 2936, and 2939 each coordinate Zn(2+). The RdRp catalytic domain occupies 3017 to 3169 (GLVYADDTAG…APVDESFAGA (153 aa)). Residues His3204, Cys3220, and Cys3339 each coordinate Zn(2+).

The protein in the N-terminal section; belongs to the class I-like SAM-binding methyltransferase superfamily. mRNA cap 0-1 NS5-type methyltransferase family. In terms of assembly, homodimer. Interacts (via N-terminus) with host EXOC1 (via C-terminus); this interaction results in EXOC1 degradation through the proteasome degradation pathway. As to quaternary structure, forms heterodimers with envelope protein E in the endoplasmic reticulum and Golgi. Homodimer; in the endoplasmic reticulum and Golgi. Interacts with protein prM. Interacts with non-structural protein 1. In terms of assembly, homodimer; Homohexamer when secreted. Interacts with envelope protein E. As to quaternary structure, interacts (via N-terminus) with serine protease NS3. Forms a heterodimer with serine protease NS3. May form homooligomers. In terms of assembly, forms a heterodimer with NS2B. Interacts with non-structural protein 2A (via N-terminus). Interacts with NS4B. Interacts with unphosphorylated RNA-directed RNA polymerase NS5; this interaction stimulates RNA-directed RNA polymerase NS5 guanylyltransferase activity. NS3 interacts with host PDCD6IP; this interaction contributes to virion release. As to quaternary structure, interacts with serine protease NS3. Homodimer. Interacts with host STAT2; this interaction prevents the establishment of cellular antiviral state. Interacts with host TRIM23; this interaction leads to NS5 ubiquitination. In terms of processing, specific enzymatic cleavages in vivo yield mature proteins. The nascent capsid protein C contains a C-terminal hydrophobic domain that act as a signal sequence for translocation of prM into the lumen of the ER. Mature capsid protein C is cleaved at a site upstream of this hydrophobic domain by NS3. prM is cleaved in post-Golgi vesicles by a host furin, releasing the mature small envelope protein M, and peptide pr. Non-structural protein 2A-alpha, a C-terminally truncated form of non-structural protein 2A, results from partial cleavage by NS3. Specific enzymatic cleavages in vivo yield mature proteins peptide 2K acts as a signal sequence and is removed from the N-terminus of NS4B by the host signal peptidase in the ER lumen. Signal cleavage at the 2K-4B site requires a prior NS3 protease-mediated cleavage at the 4A-2K site. Post-translationally, cleaved in post-Golgi vesicles by a host furin, releasing the mature small envelope protein M, and peptide pr. This cleavage is incomplete as up to 30% of viral particles still carry uncleaved prM. N-glycosylated. In terms of processing, N-glycosylated. The excreted form is glycosylated and this is required for efficient secretion of the protein from infected cells. Post-translationally, polyubiquitinated; ubiquitination is probably mediated by host TRIM23 and is prerequisite for NS5-STAT2 interaction. NS5 is not ISGylated or sumoylated. Phosphorylated on serines residues. This phosphorylation may trigger NS5 nuclear localization.

The protein localises to the virion. Its subcellular location is the host nucleus. It localises to the host cytoplasm. It is found in the host perinuclear region. The protein resides in the secreted. The protein localises to the virion membrane. Its subcellular location is the host endoplasmic reticulum membrane. The enzyme catalyses Selective hydrolysis of -Xaa-Xaa-|-Yaa- bonds in which each of the Xaa can be either Arg or Lys and Yaa can be either Ser or Ala.. It catalyses the reaction RNA(n) + a ribonucleoside 5'-triphosphate = RNA(n+1) + diphosphate. The catalysed reaction is a ribonucleoside 5'-triphosphate + H2O = a ribonucleoside 5'-diphosphate + phosphate + H(+). It carries out the reaction ATP + H2O = ADP + phosphate + H(+). The enzyme catalyses a 5'-end (5'-triphosphoguanosine)-ribonucleoside in mRNA + S-adenosyl-L-methionine = a 5'-end (N(7)-methyl 5'-triphosphoguanosine)-ribonucleoside in mRNA + S-adenosyl-L-homocysteine. It catalyses the reaction a 5'-end (N(7)-methyl 5'-triphosphoguanosine)-ribonucleoside in mRNA + S-adenosyl-L-methionine = a 5'-end (N(7)-methyl 5'-triphosphoguanosine)-(2'-O-methyl-ribonucleoside) in mRNA + S-adenosyl-L-homocysteine + H(+). Functionally, plays a role in virus budding by binding to the cell membrane and gathering the viral RNA into a nucleocapsid that forms the core of a mature virus particle. During virus entry, may induce genome penetration into the host cytoplasm after hemifusion induced by the surface proteins. Can migrate to the cell nucleus where it modulates host functions. Its function is as follows. Inhibits RNA silencing by interfering with host Dicer. In terms of biological role, prevents premature fusion activity of envelope proteins in trans-Golgi by binding to envelope protein E at pH6.0. After virion release in extracellular space, gets dissociated from E dimers. Acts as a chaperone for envelope protein E during intracellular virion assembly by masking and inactivating envelope protein E fusion peptide. prM is the only viral peptide matured by host furin in the trans-Golgi network probably to avoid catastrophic activation of the viral fusion activity in acidic Golgi compartment prior to virion release. prM-E cleavage is inefficient, and many virions are only partially matured. These uncleaved prM would play a role in immune evasion. Functionally, may play a role in virus budding. Exerts cytotoxic effects by activating a mitochondrial apoptotic pathway through M ectodomain. May display a viroporin activity. Its function is as follows. Binds to host cell surface receptor and mediates fusion between viral and cellular membranes. Envelope protein is synthesized in the endoplasmic reticulum in the form of heterodimer with protein prM. They play a role in virion budding in the ER, and the newly formed immature particle is covered with 60 spikes composed of heterodimer between precursor prM and envelope protein E. The virion is transported to the Golgi apparatus where the low pH causes dissociation of PrM-E heterodimers and formation of E homodimers. prM-E cleavage is inefficient, and many virions are only partially matured. These uncleaved prM would play a role in immune evasion. In terms of biological role, involved in immune evasion, pathogenesis and viral replication. Once cleaved off the polyprotein, is targeted to three destinations: the viral replication cycle, the plasma membrane and the extracellular compartment. Essential for viral replication. Required for formation of the replication complex and recruitment of other non-structural proteins to the ER-derived membrane structures. Excreted as a hexameric lipoparticle that plays a role against host immune response. Antagonizing the complement function. Binds to the host macrophages and dendritic cells. Inhibits signal transduction originating from Toll-like receptor 3 (TLR3). Component of the viral RNA replication complex that functions in virion assembly and antagonizes the host immune response. Functionally, required cofactor for the serine protease function of NS3. May have membrane-destabilizing activity and form viroporins. Its function is as follows. Displays three enzymatic activities: serine protease, NTPase and RNA helicase. NS3 serine protease, in association with NS2B, performs its autocleavage and cleaves the polyprotein at dibasic sites in the cytoplasm: C-prM, NS2A-NS2B, NS2B-NS3, NS3-NS4A, NS4A-2K and NS4B-NS5. NS3 RNA helicase binds RNA and unwinds dsRNA in the 3' to 5' direction. Also plays a role in virus assembly. In terms of biological role, regulates the ATPase activity of the NS3 helicase activity. NS4A allows NS3 helicase to conserve energy during unwinding. Functions as a signal peptide for NS4B and is required for the interferon antagonism activity of the latter. Functionally, induces the formation of ER-derived membrane vesicles where the viral replication takes place. Inhibits interferon (IFN)-induced host STAT1 phosphorylation and nuclear translocation, thereby preventing the establishment of cellular antiviral state by blocking the IFN-alpha/beta pathway. Its function is as follows. Replicates the viral (+) and (-) RNA genome, and performs the capping of genomes in the cytoplasm. NS5 methylates viral RNA cap at guanine N-7 and ribose 2'-O positions. Besides its role in RNA genome replication, also prevents the establishment of cellular antiviral state by blocking the interferon-alpha/beta (IFN-alpha/beta) signaling pathway. IFN-I induces binding of NS5 to host IFN-activated transcription factor STAT2, preventing its transcriptional activity. Host TRIM23 is the E3 ligase that interacts with and polyubiquitinates NS5 to promote its binding to STAT2 and trigger IFN-I signaling inhibition. This chain is Genome polyprotein, found in Banzi virus (BANV).